Reading from the N-terminus, the 156-residue chain is Small ribosomal subunit protein uS7 (156 aa).

This sequence belongs to the universal ribosomal protein uS7 family. Part of the 30S ribosomal subunit. Contacts proteins S9 and S11.

Functionally, one of the primary rRNA binding proteins, it binds directly to 16S rRNA where it nucleates assembly of the head domain of the 30S subunit. Is located at the subunit interface close to the decoding center, probably blocks exit of the E-site tRNA. The sequence is that of Small ribosomal subunit protein uS7 from Prochlorococcus marinus subsp. pastoris (strain CCMP1986 / NIES-2087 / MED4).